The sequence spans 84 residues: Protein SlyX homolog (84 aa).

This sequence belongs to the SlyX family.

In Mannheimia succiniciproducens (strain KCTC 0769BP / MBEL55E), this protein is Protein SlyX homolog.